The following is a 557-amino-acid chain: DNA ligase B (557 aa).

K125 functions as the N6-AMP-lysine intermediate in the catalytic mechanism.

It belongs to the NAD-dependent DNA ligase family. LigB subfamily.

The catalysed reaction is NAD(+) + (deoxyribonucleotide)n-3'-hydroxyl + 5'-phospho-(deoxyribonucleotide)m = (deoxyribonucleotide)n+m + AMP + beta-nicotinamide D-nucleotide.. Its function is as follows. Catalyzes the formation of phosphodiester linkages between 5'-phosphoryl and 3'-hydroxyl groups in double-stranded DNA using NAD as a coenzyme and as the energy source for the reaction. This chain is DNA ligase B, found in Pseudomonas entomophila (strain L48).